Consider the following 480-residue polypeptide: MSPQTETKASVGFKAGVKDYKLTYYTPEYQPLDTDILAAFRVTPQPGVPSEEAGAAVAAESSTGTWTTVWTDGLTSLDRYKGRCYHIDAVPGEDNQYICYVAYPLDLFEEGSVTNMFTSIVGNVFGFKALRALRLEDLRIPVAYIKTFQGPPHGIQVERDKLNKYGRPLLGCTIKPKLGLSAKNYGRAVYECLRGGLDFTKDDENVNSQPFMRWRDRFLFCAEAIYKAQAETGEIKGHYLNATAGTCEEMIKRAVFARELGVPIVMHDYLTGGFTANTSLAHYCRDNGLLLHIHRAMHAVIDRQKNHGMHFRVLAKALRLSGGDHIHAGTVVGKLEGERDITLGFVDLLRDDYTEIDPERGIYFTQFWVSTPGVLPVASGGIHVWHMPALTEIFGDDSVLQFGGGTLGHPWGNAPGAVANRVALEACVQARNEGRDLAREGATIIREASKWSPELAAACEVWKEIKFEFPAVDTLDKKKG.

A propeptide spanning residues 1-2 is cleaved from the precursor; that stretch reads MS. Pro3 carries the N-acetylproline modification. Position 14 is an N6,N6,N6-trimethyllysine (Lys14). Positions 123 and 173 each coordinate substrate. Lys175 functions as the Proton acceptor in the catalytic mechanism. Lys177 is a substrate binding site. Residues Lys201, Asp203, and Glu204 each contribute to the Mg(2+) site. Lys201 carries the N6-carboxylysine modification. The active-site Proton acceptor is His294. Arg295, His327, and Ser379 together coordinate substrate.

The protein belongs to the RuBisCO large chain family. Type I subfamily. In terms of assembly, heterohexadecamer of 8 large chains and 8 small chains; disulfide-linked. The disulfide link is formed within the large subunit homodimers. The cofactor is Mg(2+). Post-translationally, the disulfide bond which can form in the large chain dimeric partners within the hexadecamer appears to be associated with oxidative stress and protein turnover.

It is found in the plastid. The protein resides in the chloroplast. It catalyses the reaction 2 (2R)-3-phosphoglycerate + 2 H(+) = D-ribulose 1,5-bisphosphate + CO2 + H2O. It carries out the reaction D-ribulose 1,5-bisphosphate + O2 = 2-phosphoglycolate + (2R)-3-phosphoglycerate + 2 H(+). Functionally, ruBisCO catalyzes two reactions: the carboxylation of D-ribulose 1,5-bisphosphate, the primary event in carbon dioxide fixation, as well as the oxidative fragmentation of the pentose substrate in the photorespiration process. Both reactions occur simultaneously and in competition at the same active site. This is Ribulose bisphosphate carboxylase large chain from Alluaudia procera (Madagascan ocotillo).